A 129-amino-acid chain; its full sequence is Small ribosomal subunit protein uS11 (129 aa).

The protein belongs to the universal ribosomal protein uS11 family. As to quaternary structure, part of the 30S ribosomal subunit. Interacts with proteins S7 and S18. Binds to IF-3.

In terms of biological role, located on the platform of the 30S subunit, it bridges several disparate RNA helices of the 16S rRNA. Forms part of the Shine-Dalgarno cleft in the 70S ribosome. The chain is Small ribosomal subunit protein uS11 from Cereibacter sphaeroides (strain ATCC 17025 / ATH 2.4.3) (Rhodobacter sphaeroides).